An 841-amino-acid polypeptide reads, in one-letter code: Probable alpha-glucuronidase A (841 aa).

Residues 1–20 (MRGLNLFQLILALLLSMVAA) form the signal peptide. 15 N-linked (GlcNAc...) asparagine glycosylation sites follow: N51, N76, N85, N149, N222, N279, N310, N343, N450, N465, N527, N576, N682, N723, and N732.

It belongs to the glycosyl hydrolase 67 family.

The protein resides in the secreted. It catalyses the reaction an alpha-D-glucuronoside + H2O = D-glucuronate + an alcohol. Functionally, alpha-glucuronidase involved in the hydrolysis of xylan, a major structural heterogeneous polysaccharide found in plant biomass representing the second most abundant polysaccharide in the biosphere, after cellulose. Releases 4-O-methylglucuronic acid from xylan. The chain is Probable alpha-glucuronidase A (aguA) from Aspergillus niger.